We begin with the raw amino-acid sequence, 613 residues long: DNA repair and telomere maintenance protein nbs1 (613 aa).

The FHA domain maps to 23 to 86 (YIVGRNVSDD…FGTKVNEKVV (64 aa)). BRCT domains are found at residues 107 to 186 (FTIN…YLST) and 228 to 302 (GFSC…KIII). A Phosphoserine modification is found at S355. Disordered stretches follow at residues 381 to 428 (KEPE…GQGK) and 546 to 613 (TEVF…KFHF). The segment covering 387-399 (LSNQSNNGSAQNK) has biased composition (polar residues). The span at 400–409 (KSGDNSEKTK) shows a compositional bias: basic and acidic residues. The span at 574-592 (SSDKSGKSSISKKSSNSFK) shows a compositional bias: low complexity. Positions 611–613 (FHF) match the FxF/Y motif motif.

This sequence belongs to the Nibrin family. Component of the MRN complex composed of two heterodimers rad32 and rad50 associated with a single nbs1. Interacts with (phosphorylated) ctp1/CtIP. Interacts (via FxF/Y motif) with tel1/atm.

It localises to the nucleus. The protein resides in the chromosome. Its subcellular location is the telomere. Functionally, component of the MRN complex, which plays a central role in double-strand break (DSB) repair, DNA recombination, maintenance of telomere integrity and meiosis. The MRN complex is involved in the repair of DNA double-strand breaks (DSBs) via homologous recombination (HR), an error-free mechanism which primarily occurs during S and G2 phases. The complex (1) mediates the end resection of damaged DNA, which generates proper single-stranded DNA, a key initial steps in HR, and is (2) required for the recruitment of other repair factors and efficient activation of tel1/atm upon DNA damage. The MRN complex possesses single-strand endonuclease activity and double-strand-specific 3'-5' exonuclease activity, which are provided by MRE11, to initiate end resection, which is required for single-strand invasion and recombination. Within the MRN complex, nbs1 acts as a protein-protein adapter, which specifically recognizes and binds phosphorylated proteins, promoting their recruitment to DNA damage sites. Recruits rad32 and rad50 components of the MRN complex to DSBs in response to DNA damage. Promotes the recruitment of tel1/atm to the DNA damage sites, activating tel1/atm function. Mediates the recruitment of phosphorylated ctp1/CtIP to DSBs, leading to cooperation between the MRN complex and ctp1/CtIP to initiate end resection. The chain is DNA repair and telomere maintenance protein nbs1 from Schizosaccharomyces pombe (strain 972 / ATCC 24843) (Fission yeast).